The following is a 1229-amino-acid chain: Phosphorylase b kinase regulatory subunit alpha, liver isoform (1229 aa).

Positions Asp-625–Tyr-646 are enriched in acidic residues. The tract at residues Asp-625–Asn-648 is disordered. Positions Leu-825–Leu-855 are calmodulin-binding. Residues Glu-1024–Gln-1050 are disordered. Polar residues predominate over residues Arg-1028–Gly-1037. Residues His-1052–Ser-1092 form a calmodulin-binding region. Cys-1226 carries the S-farnesyl cysteine lipid modification.

The protein belongs to the phosphorylase b kinase regulatory chain family. As to quaternary structure, polymer of 16 chains, four each of alpha, beta, gamma, and delta. Alpha and beta are regulatory chains, gamma is the catalytic chain, and delta is calmodulin. In terms of processing, although the final Cys may be farnesylated, the terminal tripeptide is probably not removed, and the C-terminus is not methylated.

Its subcellular location is the cell membrane. Its pathway is glycan biosynthesis; glycogen metabolism. Its activity is regulated as follows. By phosphorylation of various serine residues and by calcium. In terms of biological role, phosphorylase b kinase catalyzes the phosphorylation of serine in certain substrates, including troponin I. The alpha chain may bind calmodulin. This Takifugu rubripes (Japanese pufferfish) protein is Phosphorylase b kinase regulatory subunit alpha, liver isoform (phka2).